The sequence spans 417 residues: Queuine tRNA-ribosyltransferase accessory subunit 2 (417 aa).

Zn(2+) is bound by residues Cys324, Cys326, Cys329, and His355.

It belongs to the queuine tRNA-ribosyltransferase family. QTRT2 subfamily. As to quaternary structure, heterodimer of a catalytic subunit and an accessory subunit. It depends on Zn(2+) as a cofactor.

The protein resides in the cytoplasm. Its function is as follows. Non-catalytic subunit of the queuine tRNA-ribosyltransferase (TGT) that catalyzes the base-exchange of a guanine (G) residue with queuine (Q) at position 34 (anticodon wobble position) in tRNAs with GU(N) anticodons (tRNA-Asp, -Asn, -His and -Tyr), resulting in the hypermodified nucleoside queuosine (7-(((4,5-cis-dihydroxy-2-cyclopenten-1-yl)amino)methyl)-7-deazaguanosine). The protein is Queuine tRNA-ribosyltransferase accessory subunit 2 of Drosophila virilis (Fruit fly).